The primary structure comprises 386 residues: Formate-dependent phosphoribosylglycinamide formyltransferase (386 aa).

Residues E10–L11 and E70 contribute to the N(1)-(5-phospho-beta-D-ribosyl)glycinamide site. ATP-binding positions include R102, K143, S148–Q153, E183–V186, and E191. The ATP-grasp domain maps to D107 to L298. Residues E256 and E268 each coordinate Mg(2+). N(1)-(5-phospho-beta-D-ribosyl)glycinamide contacts are provided by residues D275, K346, and R353–R354.

It belongs to the PurK/PurT family. In terms of assembly, homodimer.

It catalyses the reaction N(1)-(5-phospho-beta-D-ribosyl)glycinamide + formate + ATP = N(2)-formyl-N(1)-(5-phospho-beta-D-ribosyl)glycinamide + ADP + phosphate + H(+). It functions in the pathway purine metabolism; IMP biosynthesis via de novo pathway; N(2)-formyl-N(1)-(5-phospho-D-ribosyl)glycinamide from N(1)-(5-phospho-D-ribosyl)glycinamide (formate route): step 1/1. In terms of biological role, involved in the de novo purine biosynthesis. Catalyzes the transfer of formate to 5-phospho-ribosyl-glycinamide (GAR), producing 5-phospho-ribosyl-N-formylglycinamide (FGAR). Formate is provided by PurU via hydrolysis of 10-formyl-tetrahydrofolate. This Flavobacterium psychrophilum (strain ATCC 49511 / DSM 21280 / CIP 103535 / JIP02/86) protein is Formate-dependent phosphoribosylglycinamide formyltransferase.